Here is a 146-residue protein sequence, read N- to C-terminus: MSKPVKIGPWGGNGGSERDVQPKPIRMVSMTVSSGAIVDAIAFTYVGTDNVQHSSGIKWGGTGGTEDTINLDATNYVTEISGTVGKFGTDDIVTSLKIITSKGVTRTYGSGTGIPFRVPVLDGGKIAGFFGRAGAFLDAIGFYITP.

The tract at residues 1–21 (MSKPVKIGPWGGNGGSERDVQ) is disordered. One can recognise a Jacalin-type lectin domain in the interval 4 to 146 (PVKIGPWGGN…LDAIGFYITP (143 aa)).

Belongs to the jacalin lectin family.

It is found in the secreted. Its subcellular location is the extracellular space. The protein resides in the apoplast. Functionally, mannose-specific lectin. Has a weak agglutinating activity against rabbit erythrocytes. This Hordeum vulgare (Barley) protein is Horcolin.